The chain runs to 353 residues: (3aS,4S,5R,7aS)-5-hydroxy-7a-methyl-1-oxo-octahydro-1H-indene-4-carboxyl-CoA dehydrogenase (353 aa).

FMN-binding positions include 22-24, 171-173, and 194-195; these read GMG, AGG, and GT.

It belongs to the nitronate monooxygenase family.

The catalysed reaction is (3aS,4S,5R,7aS)-5-hydroxy-7a-methyl-1-oxo-octahydro-1H-indene-4-carboxyl-CoA + NAD(+) = (5R,7aS)-5-hydroxy-7a-methyl-1-oxo-2,3,5,6,7,7a-hexahydro-1H-indene-carboxyl-CoA + NADH + H(+). Its pathway is steroid metabolism; cholesterol degradation. Involved in the final steps of cholesterol and steroid degradation. Probably catalyzes the introduction of a double bound into the C ring of 5OH-HIC-CoA, leading to the formation of (5R,7aS)-5-hydroxy-7a-methyl-1-oxo-3,5,6,7-tetrahydro-2H-indene-4-carboxyl-CoA. The chain is (3aS,4S,5R,7aS)-5-hydroxy-7a-methyl-1-oxo-octahydro-1H-indene-4-carboxyl-CoA dehydrogenase from Rhodococcus jostii (strain RHA1).